We begin with the raw amino-acid sequence, 493 residues long: MKLNPLMAAGMGLGFTLFWACPTLAALTEQQNFGIEIKATAQAEDDRDLGTRSGGDVNGVGLDLRPWVYGERGDWSGYAMGQVVTATDTIQTDPLEQSNSDGSGTQTSRGTASEREVEKSYAALREFWIGYSGFTPYPGEILKVGRQRLRNDDGQWHDTNIEAINWNFDTTLLRAELGAAQRFSEYRTDLTELAPDDEDRKHLFGSASYQWTPGHWAGVRAHYSHDDGKLKSQGEQLDDLDKTSNGNLTWLGLQADSDAYNYRNTTPLNYWGSLTWLNGTRDEIGVTSAANDQFFAGEKNSRDMNGWATDLGLRLRLDPQWQVGAAYSRASKDYIQNGLESNRSNWTGTRSRIHRFGEAFQGEMANVETGSLFASWQMNEEYDASLIYHKFRRVDGNTGIGGSGINAVRENGDSNTFSSLPLEDGRKDLGQEMDLVVTKYFKQGLLPASLSQSFDEPSALVRLRAGVFKPGDAYHNGVDEYMHRAVVDVIWRF.

Residues 1 to 25 (MKLNPLMAAGMGLGFTLFWACPTLA) form the signal peptide. The segment covering 93–111 (DPLEQSNSDGSGTQTSRGT) has biased composition (polar residues). The disordered stretch occupies residues 93–115 (DPLEQSNSDGSGTQTSRGTASER).

The protein belongs to the AlgE family.

It is found in the cell outer membrane. The protein operates within glycan biosynthesis; alginate biosynthesis. Functionally, has non-porin-like, channel-forming properties and probably functions as an alginate permeability pore. This is Alginate production protein AlgE (algE) from Pseudomonas syringae pv. tomato (strain ATCC BAA-871 / DC3000).